The following is a 571-amino-acid chain: Methionine--tRNA ligase (571 aa).

Residues 10–20 (PYVNAVPHLGN) carry the 'HIGH' region motif. Zn(2+) contacts are provided by cysteine 143, cysteine 146, cysteine 156, and cysteine 159. Residues 333–337 (KFSKS) carry the 'KMSKS' region motif. Residue lysine 336 participates in ATP binding.

The protein belongs to the class-I aminoacyl-tRNA synthetase family. MetG type 1 subfamily. Zn(2+) is required as a cofactor.

The protein resides in the cytoplasm. The enzyme catalyses tRNA(Met) + L-methionine + ATP = L-methionyl-tRNA(Met) + AMP + diphosphate. In terms of biological role, is required not only for elongation of protein synthesis but also for the initiation of all mRNA translation through initiator tRNA(fMet) aminoacylation. The protein is Methionine--tRNA ligase of Sulfurisphaera tokodaii (strain DSM 16993 / JCM 10545 / NBRC 100140 / 7) (Sulfolobus tokodaii).